The sequence spans 278 residues: Bifunctional protein FolD (278 aa).

Residues 165–167 (GRS), serine 190, and threonine 231 each bind NADP(+).

The protein belongs to the tetrahydrofolate dehydrogenase/cyclohydrolase family. In terms of assembly, homodimer.

The catalysed reaction is (6R)-5,10-methylene-5,6,7,8-tetrahydrofolate + NADP(+) = (6R)-5,10-methenyltetrahydrofolate + NADPH. The enzyme catalyses (6R)-5,10-methenyltetrahydrofolate + H2O = (6R)-10-formyltetrahydrofolate + H(+). It functions in the pathway one-carbon metabolism; tetrahydrofolate interconversion. In terms of biological role, catalyzes the oxidation of 5,10-methylenetetrahydrofolate to 5,10-methenyltetrahydrofolate and then the hydrolysis of 5,10-methenyltetrahydrofolate to 10-formyltetrahydrofolate. This chain is Bifunctional protein FolD, found in Clostridium acetobutylicum (strain ATCC 824 / DSM 792 / JCM 1419 / IAM 19013 / LMG 5710 / NBRC 13948 / NRRL B-527 / VKM B-1787 / 2291 / W).